A 430-amino-acid polypeptide reads, in one-letter code: 3-phosphoshikimate 1-carboxyvinyltransferase (430 aa).

3-phosphoshikimate is bound by residues Lys-21, Ser-22, and Arg-26. A phosphoenolpyruvate-binding site is contributed by Lys-21. The phosphoenolpyruvate site is built by Gly-94 and Arg-122. 3-phosphoshikimate-binding residues include Ser-168, Gln-170, Asp-315, and Lys-342. Gln-170 serves as a coordination point for phosphoenolpyruvate. Asp-315 (proton acceptor) is an active-site residue. Arg-346 and Arg-389 together coordinate phosphoenolpyruvate.

Belongs to the EPSP synthase family. Monomer.

It is found in the cytoplasm. It carries out the reaction 3-phosphoshikimate + phosphoenolpyruvate = 5-O-(1-carboxyvinyl)-3-phosphoshikimate + phosphate. It functions in the pathway metabolic intermediate biosynthesis; chorismate biosynthesis; chorismate from D-erythrose 4-phosphate and phosphoenolpyruvate: step 6/7. Its function is as follows. Catalyzes the transfer of the enolpyruvyl moiety of phosphoenolpyruvate (PEP) to the 5-hydroxyl of shikimate-3-phosphate (S3P) to produce enolpyruvyl shikimate-3-phosphate and inorganic phosphate. The sequence is that of 3-phosphoshikimate 1-carboxyvinyltransferase from Salinibacter ruber (strain DSM 13855 / M31).